We begin with the raw amino-acid sequence, 31 residues long: Cytochrome b6-f complex subunit 6 (31 aa).

The helical transmembrane segment at 4-24 (VISYLSLLFISFLFALTLFIV) threads the bilayer.

This sequence belongs to the PetL family. The 4 large subunits of the cytochrome b6-f complex are cytochrome b6, subunit IV (17 kDa polypeptide, PetD), cytochrome f and the Rieske protein, while the 4 small subunits are PetG, PetL, PetM and PetN. The complex functions as a dimer.

Its subcellular location is the plastid. It is found in the chloroplast thylakoid membrane. Its function is as follows. Component of the cytochrome b6-f complex, which mediates electron transfer between photosystem II (PSII) and photosystem I (PSI), cyclic electron flow around PSI, and state transitions. PetL is important for photoautotrophic growth as well as for electron transfer efficiency and stability of the cytochrome b6-f complex. The sequence is that of Cytochrome b6-f complex subunit 6 from Chara vulgaris (Common stonewort).